The sequence spans 179 residues: Large ribosomal subunit protein uL5 (179 aa).

Belongs to the universal ribosomal protein uL5 family. In terms of assembly, part of the 50S ribosomal subunit; part of the 5S rRNA/L5/L18/L25 subcomplex. Contacts the 5S rRNA and the P site tRNA. Forms a bridge to the 30S subunit in the 70S ribosome.

Its function is as follows. This is one of the proteins that bind and probably mediate the attachment of the 5S RNA into the large ribosomal subunit, where it forms part of the central protuberance. In the 70S ribosome it contacts protein S13 of the 30S subunit (bridge B1b), connecting the 2 subunits; this bridge is implicated in subunit movement. Contacts the P site tRNA; the 5S rRNA and some of its associated proteins might help stabilize positioning of ribosome-bound tRNAs. The polypeptide is Large ribosomal subunit protein uL5 (Bacillus anthracis (strain A0248)).